The primary structure comprises 447 residues: Voltage-gated purine nucleotide uniporter SLC17A9 (447 aa).

The tract at residues 1-26 is disordered; sequence MPSQRSSLMQPIPEETRKTPSAAAED. A compositionally biased stretch (basic and acidic residues) spans 14–26; the sequence is EETRKTPSAAAED. 11 helical membrane-spanning segments follow: residues 36–58, 74–94, 103–123, 129–149, 169–189, 197–217, 252–272, 287–307, 327–347, 380–400, and 413–433; these read LWTG…MPVC, GIVL…GGHL, VILL…LLAH, LAFV…YFPA, TVGA…SVLL, VFYF…KYLL, VWAV…LLSW, WVFN…SGFI, VMGL…TSFL, GFLF…GVCL, and CVFH…LVFG.

This sequence belongs to the major facilitator superfamily. Sodium/anion cotransporter family.

It localises to the cytoplasmic vesicle. It is found in the secretory vesicle. The protein localises to the chromaffin granule membrane. The protein resides in the secretory vesicle membrane. Its subcellular location is the lysosome membrane. The catalysed reaction is ATP(in) = ATP(out). It carries out the reaction ADP(in) = ADP(out). It catalyses the reaction GTP(in) = GTP(out). With respect to regulation, activity is chloride-dependent. Voltage-gated ATP nucleotide uniporter that can also transport the purine nucleotides ADP and GTP. Uses the membrane potential as the driving force to control ATP accumulation in lysosomes and secretory vesicles. By controlling ATP storage in lysosomes, regulates ATP-dependent proteins of these organelles. Also indirectly regulates the exocytosis of ATP through its import into lysosomes in astrocytes and secretory vesicles such as adrenal chromaffin granules, mucin granules and synaptic vesicles. The protein is Voltage-gated purine nucleotide uniporter SLC17A9 of Rattus norvegicus (Rat).